A 340-amino-acid chain; its full sequence is Putative methionyl-tRNA formyltransferase (340 aa).

It belongs to the Fmt family.

The protein localises to the mitochondrion. It localises to the mitochondrion matrix. Its subcellular location is the cytoplasm. It carries out the reaction L-methionyl-tRNA(fMet) + (6R)-10-formyltetrahydrofolate = N-formyl-L-methionyl-tRNA(fMet) + (6S)-5,6,7,8-tetrahydrofolate + H(+). Formylates methionyl-tRNA in mitochondria and the cytoplasm. Responsible for the formylation of the N-terminally formylated (Nt-formylated) mitochondrial matrix proteins that are encoded by mitochondrial DNA. Nt-formylated proteins in the cytoplasm are strongly up-regulated in stationary phase or upon starvation for specific amino acids and are targeted for degradation by an E3 ubiquitin ligase-mediated fMet/N-end rule pathway. Increased Nt-formylation of cytosolic proteins appears to be important for adaptation to these stresses. The polypeptide is Putative methionyl-tRNA formyltransferase (fmt1) (Schizosaccharomyces pombe (strain 972 / ATCC 24843) (Fission yeast)).